Reading from the N-terminus, the 101-residue chain is Large ribosomal subunit protein uL24 (101 aa).

The protein belongs to the universal ribosomal protein uL24 family. As to quaternary structure, part of the 50S ribosomal subunit.

In terms of biological role, one of two assembly initiator proteins, it binds directly to the 5'-end of the 23S rRNA, where it nucleates assembly of the 50S subunit. One of the proteins that surrounds the polypeptide exit tunnel on the outside of the subunit. This Streptococcus sanguinis (strain SK36) protein is Large ribosomal subunit protein uL24.